Reading from the N-terminus, the 219-residue chain is MRDSRQPVIRSSPSAVMGKYRNGQFMCHGMAQTYRAYREEMRTFLTGPYLSLMNAFTHHSDARVEEICKNEYIPPFEDLLKQYCTLRLDGGRQSGKSIAVTNFAANWLYDGGTVIVLSNTSAYAKISANNIKKEFSRYSNDDIRFRLFTDSVRSFIGNKGSKFRGLKLSRILYIIDEPVKSPDMDKIYSVHIDTVHYCCNSKCCIGGITRPQFFVIGMQ.

This is an uncharacterized protein from Escherichia coli (Bacteriophage T4).